Consider the following 99-residue polypeptide: Malonate decarboxylase acyl carrier protein (99 aa).

Serine 25 is modified (O-(phosphoribosyl dephospho-coenzyme A)serine).

It belongs to the MdcC family. In terms of processing, covalently binds the prosthetic group of malonate decarboxylase.

The protein localises to the cytoplasm. Subunit of malonate decarboxylase, it is an acyl carrier protein to which acetyl and malonyl thioester residues are bound via a 2'-(5''-phosphoribosyl)-3'-dephospho-CoA prosthetic group and turn over during the catalytic mechanism. In Pseudomonas fluorescens (strain ATCC BAA-477 / NRRL B-23932 / Pf-5), this protein is Malonate decarboxylase acyl carrier protein.